A 381-amino-acid polypeptide reads, in one-letter code: Creatine kinase M-type (381 aa).

The Phosphagen kinase N-terminal domain occupies Lys-11–Gly-98. A Phosphagen kinase C-terminal domain is found at Tyr-125–Leu-367. Ser-128 to Arg-132 provides a ligand contact to ATP. Ser-164 bears the Phosphoserine mark. Thr-166 bears the Phosphothreonine mark. The residue at position 178 (Ser-178) is a Phosphoserine. Thr-180 is subject to Phosphothreonine. His-191 is a binding site for ATP. The residue at position 199 (Ser-199) is a Phosphoserine. ATP-binding residues include Arg-236 and Arg-292. Phosphothreonine occurs at positions 313 and 322. ATP-binding positions include Arg-320 to Val-325 and Asp-335. The residue at position 372 (Ser-372) is a Phosphoserine.

This sequence belongs to the ATP:guanido phosphotransferase family. As to quaternary structure, dimer of identical or non-identical chains, which can be either B (brain type) or M (muscle type). With MM being the major form in skeletal muscle and myocardium, MB existing in myocardium, and BB existing in many tissues, especially brain.

The protein localises to the cytoplasm. The enzyme catalyses creatine + ATP = N-phosphocreatine + ADP + H(+). Its function is as follows. Reversibly catalyzes the transfer of phosphate between ATP and various phosphogens (e.g. creatine phosphate). Creatine kinase isoenzymes play a central role in energy transduction in tissues with large, fluctuating energy demands, such as skeletal muscle, heart, brain and spermatozoa. This is Creatine kinase M-type (CKM) from Bos taurus (Bovine).